Here is a 161-residue protein sequence, read N- to C-terminus: Nucleotide-binding protein Bxeno_A3642 (161 aa).

It belongs to the YajQ family.

Nucleotide-binding protein. This Paraburkholderia xenovorans (strain LB400) protein is Nucleotide-binding protein Bxeno_A3642.